Reading from the N-terminus, the 227-residue chain is Cytochrome c oxidase subunit 2 (227 aa).

The Mitochondrial intermembrane portion of the chain corresponds to 1–14 (MAYPFQLGLQDATS). A helical transmembrane segment spans residues 15–45 (PIMEELMNFHDHTLMIVFLISSLVLYIISLM). Residues 46-59 (LTTKLTHTSTMDAQ) lie on the Mitochondrial matrix side of the membrane. The helical transmembrane segment at 60–87 (EVETIWTILPAVILILIALPSLRILYMM) threads the bilayer. The Mitochondrial intermembrane segment spans residues 88 to 227 (DEINNPVLTV…NFENWSASMI (140 aa)). Cu cation-binding residues include His161, Cys196, Glu198, Cys200, His204, and Met207. Glu198 serves as a coordination point for Mg(2+).

Belongs to the cytochrome c oxidase subunit 2 family. In terms of assembly, component of the cytochrome c oxidase (complex IV, CIV), a multisubunit enzyme composed of 14 subunits. The complex is composed of a catalytic core of 3 subunits MT-CO1, MT-CO2 and MT-CO3, encoded in the mitochondrial DNA, and 11 supernumerary subunits COX4I, COX5A, COX5B, COX6A, COX6B, COX6C, COX7A, COX7B, COX7C, COX8 and NDUFA4, which are encoded in the nuclear genome. The complex exists as a monomer or a dimer and forms supercomplexes (SCs) in the inner mitochondrial membrane with NADH-ubiquinone oxidoreductase (complex I, CI) and ubiquinol-cytochrome c oxidoreductase (cytochrome b-c1 complex, complex III, CIII), resulting in different assemblies (supercomplex SCI(1)III(2)IV(1) and megacomplex MCI(2)III(2)IV(2)). Found in a complex with TMEM177, COA6, COX18, COX20, SCO1 and SCO2. Interacts with TMEM177 in a COX20-dependent manner. Interacts with COX20. Interacts with COX16. The cofactor is Cu cation.

It localises to the mitochondrion inner membrane. The catalysed reaction is 4 Fe(II)-[cytochrome c] + O2 + 8 H(+)(in) = 4 Fe(III)-[cytochrome c] + 2 H2O + 4 H(+)(out). In terms of biological role, component of the cytochrome c oxidase, the last enzyme in the mitochondrial electron transport chain which drives oxidative phosphorylation. The respiratory chain contains 3 multisubunit complexes succinate dehydrogenase (complex II, CII), ubiquinol-cytochrome c oxidoreductase (cytochrome b-c1 complex, complex III, CIII) and cytochrome c oxidase (complex IV, CIV), that cooperate to transfer electrons derived from NADH and succinate to molecular oxygen, creating an electrochemical gradient over the inner membrane that drives transmembrane transport and the ATP synthase. Cytochrome c oxidase is the component of the respiratory chain that catalyzes the reduction of oxygen to water. Electrons originating from reduced cytochrome c in the intermembrane space (IMS) are transferred via the dinuclear copper A center (CU(A)) of subunit 2 and heme A of subunit 1 to the active site in subunit 1, a binuclear center (BNC) formed by heme A3 and copper B (CU(B)). The BNC reduces molecular oxygen to 2 water molecules using 4 electrons from cytochrome c in the IMS and 4 protons from the mitochondrial matrix. In Maxomys bartelsii (Bartels's Javan maxomys), this protein is Cytochrome c oxidase subunit 2 (MT-CO2).